The sequence spans 297 residues: Probable GTP 3',8-cyclase (297 aa).

A Radical SAM core domain is found at 4–227 (RYGRQIRSFR…MQNRKKYVID (224 aa)). GTP is bound at residue R13. C20 and C24 together coordinate [4Fe-4S] cluster. Y26 lines the S-adenosyl-L-methionine pocket. C27 contacts [4Fe-4S] cluster. Residue K61 participates in GTP binding. Residue G65 coordinates S-adenosyl-L-methionine. Residue T91 participates in GTP binding. Residue S115 participates in S-adenosyl-L-methionine binding. Residue K152 coordinates GTP. Residues C243 and C246 each coordinate [4Fe-4S] cluster. Residue 248–250 (RIR) participates in GTP binding. C260 lines the [4Fe-4S] cluster pocket.

Belongs to the radical SAM superfamily. MoaA family. [4Fe-4S] cluster serves as cofactor.

It carries out the reaction GTP + AH2 + S-adenosyl-L-methionine = (8S)-3',8-cyclo-7,8-dihydroguanosine 5'-triphosphate + 5'-deoxyadenosine + L-methionine + A + H(+). The protein operates within cofactor biosynthesis; molybdopterin biosynthesis. Catalyzes the cyclization of GTP to (8S)-3',8-cyclo-7,8-dihydroguanosine 5'-triphosphate. The chain is Probable GTP 3',8-cyclase from Methanococcus maripaludis (strain DSM 14266 / JCM 13030 / NBRC 101832 / S2 / LL).